The following is a 190-amino-acid chain: dCTP deaminase (190 aa).

113–118 (KSTYAR) is a binding site for dCTP. Glu139 (proton donor/acceptor) is an active-site residue. DCTP is bound by residues Gln158, Tyr172, Lys181, and Gln182.

It belongs to the dCTP deaminase family. Homotrimer.

The catalysed reaction is dCTP + H2O + H(+) = dUTP + NH4(+). The protein operates within pyrimidine metabolism; dUMP biosynthesis; dUMP from dCTP (dUTP route): step 1/2. Catalyzes the deamination of dCTP to dUTP. This Chlamydia pneumoniae (Chlamydophila pneumoniae) protein is dCTP deaminase.